Reading from the N-terminus, the 260-residue chain is Histidine-binding periplasmic protein (260 aa).

Residues Met-1–Ala-22 form the signal peptide. Cys-60 and Cys-67 form a disulfide bridge. L-histidine is bound by residues Ser-91, Ser-92, Ser-94, Arg-99, Thr-143, and Asp-183.

It belongs to the bacterial solute-binding protein 3 family. As to quaternary structure, the complex is composed of two ATP-binding proteins (HisP), two transmembrane proteins (HisM and HisQ) and a solute-binding protein (HisJ).

The protein localises to the periplasm. Its function is as follows. Part of the ABC transporter complex HisPMQJ involved in histidine transport. Binds histidine. Interacts with HisQMP and stimulates ATPase activity of HisP, which results in histidine translocation. This is Histidine-binding periplasmic protein (hisJ) from Escherichia coli O157:H7.